The following is a 79-amino-acid chain: Conotoxin ArMSGL-0123 (79 aa).

The signal sequence occupies residues 1-20; the sequence is MSRLGIMVLTLLLLVFIVTS. Residues 21–44 constitute a propeptide that is removed on maturation; the sequence is HQDAGEKQATKRAAVNFRWRRSFT. 3 disulfide bridges follow: Cys-52–Cys-64, Cys-56–Cys-73, and Cys-63–Cys-77. Leu-78 is subject to Leucine amide.

This sequence belongs to the conotoxin O3 superfamily. In terms of tissue distribution, expressed by the venom duct.

Its subcellular location is the secreted. The polypeptide is Conotoxin ArMSGL-0123 (Conus arenatus (Sand-dusted cone)).